A 988-amino-acid chain; its full sequence is UPF0182 protein MAB_3498c (988 aa).

7 helical membrane-spanning segments follow: residues 19 to 39 (LVAASLVIVVLLLIGPRLVDT), 63 to 83 (LALFLIVGTLVAAVVFAGFGL), 114 to 134 (LFLIGVPILIGVLAGVVAQSY), 176 to 196 (FIAASIALIVNGLVHYIFGGI), 211 to 231 (IQLITFAGILVLLKVAAYWLD), 260 to 280 (KLILLAIAVICAVAVFSALVL), and 288 to 308 (IGLALLLLSSLVVGAGWPLIV).

The protein belongs to the UPF0182 family.

It localises to the cell membrane. The polypeptide is UPF0182 protein MAB_3498c (Mycobacteroides abscessus (strain ATCC 19977 / DSM 44196 / CCUG 20993 / CIP 104536 / JCM 13569 / NCTC 13031 / TMC 1543 / L948) (Mycobacterium abscessus)).